Reading from the N-terminus, the 143-residue chain is Deoxyuridine 5'-triphosphate nucleotidohydrolase (143 aa).

The protein belongs to the dUTPase family. Mg(2+) serves as cofactor.

It carries out the reaction dUTP + H2O = dUMP + diphosphate + H(+). Functionally, this enzyme is involved in nucleotide metabolism: it produces dUMP, the immediate precursor of thymidine nucleotides and it decreases the intracellular concentration of dUTP so that uracil cannot be incorporated into DNA. The protein is Deoxyuridine 5'-triphosphate nucleotidohydrolase (DUT) of Yaba monkey tumor virus (strain VR587) (YMTV).